The chain runs to 126 residues: Large ribosomal subunit protein eL8 (126 aa).

This sequence belongs to the eukaryotic ribosomal protein eL8 family. As to quaternary structure, part of the 50S ribosomal subunit. Probably part of the RNase P complex.

It is found in the cytoplasm. In terms of biological role, multifunctional RNA-binding protein that recognizes the K-turn motif in ribosomal RNA, the RNA component of RNase P, box H/ACA, box C/D and box C'/D' sRNAs. The polypeptide is Large ribosomal subunit protein eL8 (Sulfolobus acidocaldarius (strain ATCC 33909 / DSM 639 / JCM 8929 / NBRC 15157 / NCIMB 11770)).